We begin with the raw amino-acid sequence, 243 residues long: Biosynthetic peptidoglycan transglycosylase (243 aa).

The chain crosses the membrane as a helical span at residues 21 to 43; the sequence is LLIVSLVSALMSVLQVIVFRFVD.

The protein belongs to the glycosyltransferase 51 family.

The protein localises to the cell inner membrane. It catalyses the reaction [GlcNAc-(1-&gt;4)-Mur2Ac(oyl-L-Ala-gamma-D-Glu-L-Lys-D-Ala-D-Ala)](n)-di-trans,octa-cis-undecaprenyl diphosphate + beta-D-GlcNAc-(1-&gt;4)-Mur2Ac(oyl-L-Ala-gamma-D-Glu-L-Lys-D-Ala-D-Ala)-di-trans,octa-cis-undecaprenyl diphosphate = [GlcNAc-(1-&gt;4)-Mur2Ac(oyl-L-Ala-gamma-D-Glu-L-Lys-D-Ala-D-Ala)](n+1)-di-trans,octa-cis-undecaprenyl diphosphate + di-trans,octa-cis-undecaprenyl diphosphate + H(+). The protein operates within cell wall biogenesis; peptidoglycan biosynthesis. Peptidoglycan polymerase that catalyzes glycan chain elongation from lipid-linked precursors. In Xylella fastidiosa (strain Temecula1 / ATCC 700964), this protein is Biosynthetic peptidoglycan transglycosylase.